We begin with the raw amino-acid sequence, 150 residues long: Globin (150 aa).

Positions 11 to 150 (PLSAAEKTKI…MICILLRSAY (140 aa)) constitute a Globin domain. Positions 74 and 106 each coordinate heme b.

This sequence belongs to the globin family. As to quaternary structure, monomer.

In Lampetra fluviatilis (European river lamprey), this protein is Globin.